Consider the following 336-residue polypeptide: Ketol-acid reductoisomerase (NADP(+)) (336 aa).

One can recognise a KARI N-terminal Rossmann domain in the interval methionine 1–threonine 181. Residues tyrosine 24–glutamine 27, arginine 47, serine 50, and serine 52 each bind NADP(+). The active site involves histidine 107. Residue glycine 133 participates in NADP(+) binding. The region spanning serine 182 to isoleucine 327 is the KARI C-terminal knotted domain. Mg(2+) is bound by residues aspartate 190, glutamate 194, glutamate 226, and glutamate 230. Residue serine 251 coordinates substrate.

The protein belongs to the ketol-acid reductoisomerase family. Mg(2+) is required as a cofactor.

It carries out the reaction (2R)-2,3-dihydroxy-3-methylbutanoate + NADP(+) = (2S)-2-acetolactate + NADPH + H(+). It catalyses the reaction (2R,3R)-2,3-dihydroxy-3-methylpentanoate + NADP(+) = (S)-2-ethyl-2-hydroxy-3-oxobutanoate + NADPH + H(+). Its pathway is amino-acid biosynthesis; L-isoleucine biosynthesis; L-isoleucine from 2-oxobutanoate: step 2/4. It participates in amino-acid biosynthesis; L-valine biosynthesis; L-valine from pyruvate: step 2/4. Functionally, involved in the biosynthesis of branched-chain amino acids (BCAA). Catalyzes an alkyl-migration followed by a ketol-acid reduction of (S)-2-acetolactate (S2AL) to yield (R)-2,3-dihydroxy-isovalerate. In the isomerase reaction, S2AL is rearranged via a Mg-dependent methyl migration to produce 3-hydroxy-3-methyl-2-ketobutyrate (HMKB). In the reductase reaction, this 2-ketoacid undergoes a metal-dependent reduction by NADPH to yield (R)-2,3-dihydroxy-isovalerate. In Halorhodospira halophila (strain DSM 244 / SL1) (Ectothiorhodospira halophila (strain DSM 244 / SL1)), this protein is Ketol-acid reductoisomerase (NADP(+)).